The primary structure comprises 197 residues: Ras-related protein Rab-7B (197 aa).

Residues 14-21, 33-38, 57-61, 119-122, and 152-153 each bind GTP; these read GEKSVGKT, VTLKPT, DTSGQ, NKID, and AK. Residues 31–39 carry the Effector region motif; it reads RFVTLKPTI. Residues Cys-196 and Cys-197 are each lipidated (S-geranylgeranyl cysteine).

The protein belongs to the small GTPase superfamily. Rab family.

Protein transport. Probably involved in vesicular traffic. The sequence is that of Ras-related protein Rab-7B (rab7B) from Dictyostelium discoideum (Social amoeba).